Here is a 319-residue protein sequence, read N- to C-terminus: 33 kDa chaperonin (319 aa).

Basic and acidic residues predominate over residues 1–10 (MTDASGSERL). Residues 1–25 (MTDASGSERLKRAKGISEGTPSSLP) are disordered. 2 disulfides stabilise this stretch: cysteine 261/cysteine 263 and cysteine 294/cysteine 297.

It belongs to the HSP33 family. In terms of processing, under oxidizing conditions two disulfide bonds are formed involving the reactive cysteines. Under reducing conditions zinc is bound to the reactive cysteines and the protein is inactive.

It localises to the cytoplasm. Its function is as follows. Redox regulated molecular chaperone. Protects both thermally unfolding and oxidatively damaged proteins from irreversible aggregation. Plays an important role in the bacterial defense system toward oxidative stress. This Synechococcus sp. (strain JA-2-3B'a(2-13)) (Cyanobacteria bacterium Yellowstone B-Prime) protein is 33 kDa chaperonin.